We begin with the raw amino-acid sequence, 689 residues long: Glycine--tRNA ligase beta subunit (689 aa).

Belongs to the class-II aminoacyl-tRNA synthetase family. As to quaternary structure, tetramer of two alpha and two beta subunits.

It is found in the cytoplasm. It catalyses the reaction tRNA(Gly) + glycine + ATP = glycyl-tRNA(Gly) + AMP + diphosphate. The sequence is that of Glycine--tRNA ligase beta subunit from Shewanella baltica (strain OS195).